Reading from the N-terminus, the 468-residue chain is MADDAGLETSLCSEQFGSGEARGCRVAADGSLQWEVGGWRWWGLSRAFTVKPEGRDSGEVGAPGAPSPPLSGLQAVFLPQGFPDSVSPDYLPYQLWDSVQAFASGLSGSLATQAVLLGIGVGNAKATVSAATATWLVKDSTGMLGRIVFAWWKGSKLDCNAKQWRLFADILNDVAMFLEIMAPVYPICFTMTVSTSNLAKCIVSVAGGATRAALTVHQARRNNMADVSAKDSSQETLVNLVGLLVSLLMLPLVSGCPGFSLGCFFFLTALHIYANYRAVRALVMETLNEGRLRLVLKHYLQRGEVLNPTAANRMEPLWTGFWPAPSLSLGVPLHRLVSSVFELQQLVEGHQEPYLLCWDQSRNQVQVVLNQKAGPKTILRAATHGLMLGALQGDGPLPAELEELRNRVQAGPKKESWVIVKETHEVLDMLFPKFLKGLQDAGWKTEKHQLEVDEWRATWLLSPEKKVL.

Ala2 carries the post-translational modification N-acetylalanine. The residue at position 49 (Thr49) is a Phosphothreonine. Residues 247–267 (LLMLPLVSGCPGFSLGCFFFL) form a helical membrane-spanning segment.

The protein belongs to the RUS1 family.

It localises to the membrane. The polypeptide is RUS family member 1 (Rusf1) (Pongo abelii (Sumatran orangutan)).